A 424-amino-acid chain; its full sequence is Dihydroorotase (424 aa).

Residues H58 and H60 each contribute to the Zn(2+) site. Substrate contacts are provided by residues 60 to 62 and N92; that span reads HLR. Residues D150, H177, and H230 each coordinate Zn(2+). N276 provides a ligand contact to substrate. A Zn(2+)-binding site is contributed by D303. D303 is a catalytic residue. Substrate contacts are provided by residues H307 and 321-322; that span reads FG.

Belongs to the metallo-dependent hydrolases superfamily. DHOase family. Class I DHOase subfamily. Zn(2+) serves as cofactor.

The catalysed reaction is (S)-dihydroorotate + H2O = N-carbamoyl-L-aspartate + H(+). It functions in the pathway pyrimidine metabolism; UMP biosynthesis via de novo pathway; (S)-dihydroorotate from bicarbonate: step 3/3. Functionally, catalyzes the reversible cyclization of carbamoyl aspartate to dihydroorotate. The protein is Dihydroorotase of Staphylococcus aureus (strain MRSA252).